Here is a 104-residue protein sequence, read N- to C-terminus: Phosphocarrier protein HPr (104 aa).

The HPr domain occupies 17 to 104 (ELSAIFMIRN…EVFNSGFGEL (88 aa)). His-31 functions as the Pros-phosphohistidine intermediate in the catalytic mechanism.

It belongs to the HPr family.

It is found in the cytoplasm. In terms of biological role, general (non sugar-specific) component of the phosphoenolpyruvate-dependent sugar phosphotransferase system (sugar PTS). This major carbohydrate active-transport system catalyzes the phosphorylation of incoming sugar substrates concomitantly with their translocation across the cell membrane. The phosphoryl group from phosphoenolpyruvate (PEP) is transferred to the phosphoryl carrier protein HPr by enzyme I. Phospho-HPr then transfers it to the PTS EIIA domain. The protein is Phosphocarrier protein HPr (ptsH) of Chlamydia muridarum (strain MoPn / Nigg).